The sequence spans 317 residues: 2,3-dihydroxyphenylpropionate/2,3-dihydroxicinnamic acid 1,2-dioxygenase (317 aa).

Residue histidine 115 is the Proton donor of the active site. Histidine 179 serves as the catalytic Proton acceptor.

This sequence belongs to the LigB/MhpB extradiol dioxygenase family. Homotetramer. Fe(2+) serves as cofactor.

It carries out the reaction 3-(2,3-dihydroxyphenyl)propanoate + O2 = (2Z,4E)-2-hydroxy-6-oxonona-2,4-dienedioate + H(+). The enzyme catalyses (2E)-3-(2,3-dihydroxyphenyl)prop-2-enoate + O2 = (2Z,4E,7E)-2-hydroxy-6-oxonona-2,4,7-trienedioate + H(+). It participates in aromatic compound metabolism; 3-phenylpropanoate degradation. Its function is as follows. Catalyzes the non-heme iron(II)-dependent oxidative cleavage of 2,3-dihydroxyphenylpropionic acid and 2,3-dihydroxicinnamic acid into 2-hydroxy-6-ketononadienedioate and 2-hydroxy-6-ketononatrienedioate, respectively. In Photorhabdus laumondii subsp. laumondii (strain DSM 15139 / CIP 105565 / TT01) (Photorhabdus luminescens subsp. laumondii), this protein is 2,3-dihydroxyphenylpropionate/2,3-dihydroxicinnamic acid 1,2-dioxygenase.